The chain runs to 235 residues: Probable carboxylesterase Os04g0669600 (235 aa).

Catalysis depends on charge relay system residues Ser113, Asp167, and His199.

This sequence belongs to the AB hydrolase superfamily. AB hydrolase 2 family.

In terms of biological role, possesses carboxylesterase activity in vitro. The chain is Probable carboxylesterase Os04g0669600 from Oryza sativa subsp. japonica (Rice).